A 306-amino-acid chain; its full sequence is OVARIAN TUMOR DOMAIN-containing deubiquitinating enzyme 1 (306 aa).

The 215-residue stretch at Ile81–Lys295 folds into the OTU domain. Residue Asp89 is part of the active site. Cys92 acts as the Nucleophile in catalysis. Residues His259 and His288 contribute to the active site.

It belongs to the peptidase C65 family.

It carries out the reaction Thiol-dependent hydrolysis of ester, thioester, amide, peptide and isopeptide bonds formed by the C-terminal Gly of ubiquitin (a 76-residue protein attached to proteins as an intracellular targeting signal).. Cleavage activities for 'Lys-48'- and 'Lys-63'-linked ubiquitin (UB) tetramers is inhibited by UB aldehyde and N-ethylmaleimide but not by the metalloprotease inhibitors 1,10-phenanthroline and EDTA, and the serine protease inhibitor phenylmethylsulfonyl fluoride. Functionally, hydrolase that can remove conjugated ubiquitin from proteins in vitro and may therefore play an important regulatory role at the level of protein turnover by preventing degradation. Cysteine protease with a preference for Met-1 and 'Lys-48' over 'Lys-63'-linked ubiquitin (UB) tetramers (e.g. Ub2, Ub3 and Ub4) as substrates. The chain is OVARIAN TUMOR DOMAIN-containing deubiquitinating enzyme 1 from Arabidopsis thaliana (Mouse-ear cress).